We begin with the raw amino-acid sequence, 300 residues long: Pantoate kinase (300 aa).

It belongs to the GHMP kinase family. PoK subfamily. Homodimer.

The catalysed reaction is (R)-pantoate + ATP = (R)-4-phosphopantoate + ADP + H(+). Its pathway is cofactor biosynthesis; coenzyme A biosynthesis. With respect to regulation, moderately stimulated in the presence of potassium cations. Inhibited by increasing concentrations of pantoate. Activity is not affected by CoA/acetyl-CoA. In terms of biological role, phosphorylates (R)-pantoate to form (R)-4-phosphopantoate in the CoA biosynthesis pathway. Displays broad nucleotide specificity and utilizes ATP, GTP, UTP, and CTP with comparable catalytic efficiencies. This is Pantoate kinase from Thermococcus kodakarensis (strain ATCC BAA-918 / JCM 12380 / KOD1) (Pyrococcus kodakaraensis (strain KOD1)).